Consider the following 154-residue polypeptide: 17.4 kDa class I heat shock protein (154 aa).

The 115-residue stretch at 40–154 (DAAAFAGARI…PDVKSIQITG (115 aa)) folds into the sHSP domain.

Belongs to the small heat shock protein (HSP20) family. As to quaternary structure, may form oligomeric structures.

Its subcellular location is the cytoplasm. This chain is 17.4 kDa class I heat shock protein (HSP17.4), found in Oryza sativa subsp. japonica (Rice).